We begin with the raw amino-acid sequence, 71 residues long: Small ribosomal subunit protein eS17 (71 aa).

It belongs to the eukaryotic ribosomal protein eS17 family.

This Pyrobaculum aerophilum (strain ATCC 51768 / DSM 7523 / JCM 9630 / CIP 104966 / NBRC 100827 / IM2) protein is Small ribosomal subunit protein eS17.